Reading from the N-terminus, the 311-residue chain is Transcription factor BIM2 (311 aa).

Disordered regions lie at residues 1-60 (MRTG…RRSK) and 271-311 (ANQG…MKTL). Basic and acidic residues-rich tracts occupy residues 33 to 44 (SNRDSKENDKAS) and 51 to 60 (SVTEQRRRSK). In terms of domain architecture, bHLH spans 45 to 95 (AIRSKHSVTEQRRRSKINERFQILRELIPNSEQKRDTASFLLEVIDYVQYL).

As to quaternary structure, homodimer. Interacts with the N-terminus of BZR2/BES1. Expressed constitutively in roots, leaves, stems, and flowers.

The protein resides in the nucleus. Functionally, positive brassinosteroid-signaling protein. This is Transcription factor BIM2 (BIM2) from Arabidopsis thaliana (Mouse-ear cress).